A 194-amino-acid polypeptide reads, in one-letter code: Peptidyl-tRNA hydrolase (194 aa).

A tRNA-binding site is contributed by Tyr-17. His-22 serves as the catalytic Proton acceptor. Residues Phe-68, Asn-70, and Asn-116 each contribute to the tRNA site.

It belongs to the PTH family. In terms of assembly, monomer.

The protein localises to the cytoplasm. It carries out the reaction an N-acyl-L-alpha-aminoacyl-tRNA + H2O = an N-acyl-L-amino acid + a tRNA + H(+). In terms of biological role, hydrolyzes ribosome-free peptidyl-tRNAs (with 1 or more amino acids incorporated), which drop off the ribosome during protein synthesis, or as a result of ribosome stalling. Catalyzes the release of premature peptidyl moieties from peptidyl-tRNA molecules trapped in stalled 50S ribosomal subunits, and thus maintains levels of free tRNAs and 50S ribosomes. The polypeptide is Peptidyl-tRNA hydrolase (Haemophilus ducreyi (strain 35000HP / ATCC 700724)).